The chain runs to 153 residues: Ribosomal RNA large subunit methyltransferase H (153 aa).

Leu71 and Gly102 together coordinate S-adenosyl-L-methionine.

The protein belongs to the RNA methyltransferase RlmH family. In terms of assembly, homodimer.

It is found in the cytoplasm. It carries out the reaction pseudouridine(1915) in 23S rRNA + S-adenosyl-L-methionine = N(3)-methylpseudouridine(1915) in 23S rRNA + S-adenosyl-L-homocysteine + H(+). Specifically methylates the pseudouridine at position 1915 (m3Psi1915) in 23S rRNA. The chain is Ribosomal RNA large subunit methyltransferase H from Anaeromyxobacter dehalogenans (strain 2CP-C).